We begin with the raw amino-acid sequence, 760 residues long: Photosystem I P700 chlorophyll a apoprotein A1 (760 aa).

The interval 1 to 22 (MTISPPESGEKDKKILESPVKA) is disordered. Positions 8–22 (SGEKDKKILESPVKA) are enriched in basic and acidic residues. Transmembrane regions (helical) follow at residues 76–99 (IFSA…FHGA), 162–185 (LMAL…FHYH), 201–225 (MNHH…HIGA), 309–327 (IAHH…GHMY), 368–391 (RHAQ…HHMY), 407–433 (LGLF…IAMV), 455–477 (ALIS…LYIH), and 551–569 (LMIH…LILL). [4Fe-4S] cluster-binding residues include cysteine 593 and cysteine 602. The next 2 membrane-spanning stretches (helical) occupy residues 609-630 (HVFL…HFSW) and 674-696 (ISMY…MFLF). Histidine 685 contributes to the divinylchlorophyll a' binding site. Residues methionine 693 and tyrosine 701 each contribute to the divinyl chlorophyll a site. Phylloquinone is bound at residue tryptophan 702. Residues 734–754 (AVGVTHFLVGGIATTWAFFHA) traverse the membrane as a helical segment.

This sequence belongs to the PsaA/PsaB family. In terms of assembly, the PsaA/B heterodimer binds the P700 divinyl chlorophyll special pair and subsequent electron acceptors. PSI consists of a core antenna complex that captures photons, and an electron transfer chain that converts photonic excitation into a charge separation. The cyanobacterial PSI reaction center is composed of one copy each of PsaA,B,C,D,E,F,I,J,K,L,M and X, and forms trimeric complexes. Requires PSI electron transfer chain: 5 divinyl chlorophyll a, 1 divinyl chlorophyll a', 2 phylloquinones and 3 4Fe-4S clusters. PSI core antenna: 90 divinyl chlorophyll a, 22 carotenoids, 3 phospholipids and 1 galactolipid. P700 is a divinyl chlorophyll a/divinyl chlorophyll a' dimer, A0 is one or more divinyl chlorophyll a, A1 is one or both phylloquinones and FX is a shared 4Fe-4S iron-sulfur center. as cofactor.

It localises to the cellular thylakoid membrane. The enzyme catalyses reduced [plastocyanin] + hnu + oxidized [2Fe-2S]-[ferredoxin] = oxidized [plastocyanin] + reduced [2Fe-2S]-[ferredoxin]. Its function is as follows. PsaA and PsaB bind P700, the primary electron donor of photosystem I (PSI), as well as the electron acceptors A0, A1 and FX. PSI is a plastocyanin/cytochrome c6-ferredoxin oxidoreductase, converting photonic excitation into a charge separation, which transfers an electron from the donor P700 chlorophyll pair to the spectroscopically characterized acceptors A0, A1, FX, FA and FB in turn. Oxidized P700 is reduced on the lumenal side of the thylakoid membrane by plastocyanin or cytochrome c6. This Prochlorococcus marinus (strain MIT 9515) protein is Photosystem I P700 chlorophyll a apoprotein A1.